The chain runs to 153 residues: DNA gyrase inhibitor 1 (153 aa).

The protein belongs to the DNA gyrase inhibitor family. Interacts with DNA gyrase.

The protein resides in the cytoplasm. In terms of biological role, inhibits the supercoiling activity of DNA gyrase. Acts by inhibiting DNA gyrase at an early step, prior to (or at the step of) binding of DNA by the gyrase. It protects cells against toxins that target DNA gyrase, by inhibiting activity of these toxins and reducing the formation of lethal double-strand breaks in the cell. The sequence is that of DNA gyrase inhibitor 1 from Dickeya dadantii (strain 3937) (Erwinia chrysanthemi (strain 3937)).